Consider the following 409-residue polypeptide: Aspartic protease pepA (409 aa).

The N-terminal stretch at 1 to 19 (MPSIVSLTAALTFVGAVIA) is a signal peptide. Residues 20-65 (SPVEKRSAFSVEQVPHTTYLKNGPAQKVKTLRKYGKPVPQSLLDAA) constitute a propeptide, activation peptide. The region spanning 97–404 (YLSPVTVGST…PDSPPRIGLA (308 aa)) is the Peptidase A1 domain. Catalysis depends on residues Asp113 and Asp293. An intrachain disulfide couples Cys329 to Cys364. The N-linked (GlcNAc...) asparagine glycan is linked to Asn335.

The protein belongs to the peptidase A1 family. As to quaternary structure, monomer.

It localises to the secreted. Its function is as follows. Secreted aspartic endopeptidase that allows assimilation of proteinaceous substrates. The scissile peptide bond is attacked by a nucleophilic water molecule activated by two aspartic residues in the active site. Shows a broad primary substrate specificity. Favors hydrophobic residues at the P1 and P1' positions. The protein is Aspartic protease pepA of Leptosphaeria maculans (strain JN3 / isolate v23.1.3 / race Av1-4-5-6-7-8) (Blackleg fungus).